The sequence spans 334 residues: Adenine deaminase (334 aa).

H14, H16, and H194 together coordinate Zn(2+). Residue E197 is the Proton donor of the active site. Zn(2+) is bound at residue D275. D276 lines the substrate pocket.

It belongs to the metallo-dependent hydrolases superfamily. Adenosine and AMP deaminases family. Adenine deaminase type 2 subfamily. The cofactor is Zn(2+).

It carries out the reaction adenine + H2O + H(+) = hypoxanthine + NH4(+). Catalyzes the hydrolytic deamination of adenine to hypoxanthine. Plays an important role in the purine salvage pathway and in nitrogen catabolism. In Hahella chejuensis (strain KCTC 2396), this protein is Adenine deaminase.